The sequence spans 685 residues: Threonine--tRNA ligase (685 aa).

The segment at 1 to 28 is disordered; the sequence is MTSPAPEHSAAPLRVPAGTTAGTAVREA. The TGS domain maps to 1–65; it reads MTSPAPEHSA…EVDVDVEPVA (65 aa). Residues 262–568 form a catalytic region; the sequence is DHRKLGTELD…LTEHYAGAFP (307 aa). Zn(2+)-binding residues include cysteine 367, histidine 418, and histidine 545.

This sequence belongs to the class-II aminoacyl-tRNA synthetase family. In terms of assembly, homodimer. Zn(2+) serves as cofactor.

It localises to the cytoplasm. It carries out the reaction tRNA(Thr) + L-threonine + ATP = L-threonyl-tRNA(Thr) + AMP + diphosphate + H(+). Catalyzes the attachment of threonine to tRNA(Thr) in a two-step reaction: L-threonine is first activated by ATP to form Thr-AMP and then transferred to the acceptor end of tRNA(Thr). Also edits incorrectly charged L-seryl-tRNA(Thr). This chain is Threonine--tRNA ligase, found in Rhodococcus erythropolis (strain PR4 / NBRC 100887).